We begin with the raw amino-acid sequence, 552 residues long: Dihydroxy-acid dehydratase (552 aa).

Position 46 (Cys46) interacts with [2Fe-2S] cluster. Asp78 serves as a coordination point for Mg(2+). Cys119 contributes to the [2Fe-2S] cluster binding site. Residues Asp120 and Lys121 each contribute to the Mg(2+) site. Lys121 bears the N6-carboxylysine mark. [2Fe-2S] cluster is bound at residue Cys191. Glu442 provides a ligand contact to Mg(2+). Ser468 functions as the Proton acceptor in the catalytic mechanism.

The protein belongs to the IlvD/Edd family. In terms of assembly, homodimer. The cofactor is [2Fe-2S] cluster. Requires Mg(2+) as cofactor.

It catalyses the reaction (2R)-2,3-dihydroxy-3-methylbutanoate = 3-methyl-2-oxobutanoate + H2O. The enzyme catalyses (2R,3R)-2,3-dihydroxy-3-methylpentanoate = (S)-3-methyl-2-oxopentanoate + H2O. The protein operates within amino-acid biosynthesis; L-isoleucine biosynthesis; L-isoleucine from 2-oxobutanoate: step 3/4. Its pathway is amino-acid biosynthesis; L-valine biosynthesis; L-valine from pyruvate: step 3/4. Functionally, functions in the biosynthesis of branched-chain amino acids. Catalyzes the dehydration of (2R,3R)-2,3-dihydroxy-3-methylpentanoate (2,3-dihydroxy-3-methylvalerate) into 2-oxo-3-methylpentanoate (2-oxo-3-methylvalerate) and of (2R)-2,3-dihydroxy-3-methylbutanoate (2,3-dihydroxyisovalerate) into 2-oxo-3-methylbutanoate (2-oxoisovalerate), the penultimate precursor to L-isoleucine and L-valine, respectively. The polypeptide is Dihydroxy-acid dehydratase (Picrophilus torridus (strain ATCC 700027 / DSM 9790 / JCM 10055 / NBRC 100828 / KAW 2/3)).